The primary structure comprises 274 residues: Protein YeeZ (274 aa).

An N-terminal signal peptide occupies residues 1-24 (MKKVAIVGLGWLGMPLAMSLSARG). Residue 170–177 (GRFFAGKT) coordinates ATP.

The protein is Protein YeeZ (yeeZ) of Escherichia coli O157:H7.